The chain runs to 505 residues: MFS efflux pump atnC (505 aa).

12 consecutive transmembrane segments (helical) span residues 48-68 (VLQV…GLTV), 117-137 (LIGW…IPYG), 148-168 (VLLL…LVCW), 181-201 (LFQC…ATIA), 216-236 (LQAT…VLMA), 240-260 (WTPC…LIAL), 304-324 (VAGL…LDFL), 343-363 (LSLR…LLLF), 377-399 (LLIA…LSPT), 403-425 (AILV…ASLW), 439-459 (TVAI…SLMY), and 469-489 (WVGL…GVLL).

This sequence belongs to the major facilitator superfamily.

Its subcellular location is the membrane. Its pathway is secondary metabolite biosynthesis. Its function is as follows. MFS efflux pump; part of the gene cluster that mediates the biosynthesis of aspercryptins, linear lipopeptides built from six amino acids including 2 highly unusual and nonproteogenic amino acids, 2-amino-octanoic acid (2aoa) and 2-amino-dodecanol (2adol). The protein is MFS efflux pump atnC of Emericella nidulans (strain FGSC A4 / ATCC 38163 / CBS 112.46 / NRRL 194 / M139) (Aspergillus nidulans).